Reading from the N-terminus, the 1076-residue chain is DNA-directed RNA polymerase subunit beta (1076 aa).

The protein belongs to the RNA polymerase beta chain family. As to quaternary structure, in plastids the minimal PEP RNA polymerase catalytic core is composed of four subunits: alpha, beta, beta', and beta''. When a (nuclear-encoded) sigma factor is associated with the core the holoenzyme is formed, which can initiate transcription.

Its subcellular location is the plastid. The enzyme catalyses RNA(n) + a ribonucleoside 5'-triphosphate = RNA(n+1) + diphosphate. DNA-dependent RNA polymerase catalyzes the transcription of DNA into RNA using the four ribonucleoside triphosphates as substrates. The protein is DNA-directed RNA polymerase subunit beta of Euglena longa (Euglenophycean alga).